Here is a 114-residue protein sequence, read N- to C-terminus: Notch-regulated ankyrin repeat-containing protein (114 aa).

ANK repeat units follow at residues glutamate 50–leucine 79 and aspartate 83–serine 112.

It belongs to the NRARP family. In terms of assembly, interacts with LEF1.

In terms of biological role, downstream effector of Notch signaling. Involved in the regulation of liver cancer cells self-renewal. Involved in angiogenesis acting downstream of Notch at branch points to regulate vascular density. Proposed to integrate endothelial Notch and Wnt signaling to control stalk cell proliferation and to stablilize new endothelial connections during angiogenesis. During somitogenesis involved in maintenance of proper somite segmentation and proper numbers of somites and vertebrae. Required for proper anterior-posterior somite patterning. Proposed to function in a negative feedback loop to destabilize Notch 1 intracellular domain (NICD) and down-regulate the Notch signal, preventing expansion of the Notch signal into the anterior somite domain. In Homo sapiens (Human), this protein is Notch-regulated ankyrin repeat-containing protein (NRARP).